The following is a 287-amino-acid chain: Troponin T, cardiac muscle (287 aa).

Composition is skewed to acidic residues over residues 1–31 (MSDV…EEAG) and 44–59 (EDGE…DGPV). Disordered regions lie at residues 1–85 (MSDV…GERV) and 124–208 (KDRI…EKKK). N-acetylserine is present on S2. S2 bears the Phosphoserine; by CK2 mark. Over residues 66-79 (APGPFMPNLVPPKI) the composition is skewed to pro residues. 2 stretches are compositionally biased toward basic and acidic residues: residues 124 to 173 (KDRI…DEAR) and 192 to 208 (QAER…EKKK). Position 197 is a phosphoserine; by PKC/PRKCA (S197). T202 carries the phosphothreonine; by PKC/PRKCA and RAF1 modification. T283 bears the Phosphothreonine; by PKC/PRKCA mark.

It belongs to the troponin T family. Post-translationally, phosphorylation at Thr-202 by PRKCA induces significant reduction in myofilament calcium sensitivity and actomyosin ATPase activity.

Functionally, troponin T is the tropomyosin-binding subunit of troponin, the thin filament regulatory complex which confers calcium-sensitivity to striated muscle actomyosin ATPase activity. In Ovis aries (Sheep), this protein is Troponin T, cardiac muscle (TNNT2).